A 77-amino-acid chain; its full sequence is MSLEDDVKAIIVDQLGVSPEDVKVDSSFIEDLNADSLDLTELIMTLEEKFAFEISEDDAEQLRTVGDVIKYIQEHQN.

In terms of domain architecture, Carrier spans 1–76; sequence MSLEDDVKAI…DVIKYIQEHQ (76 aa). Residue S36 is modified to O-(pantetheine 4'-phosphoryl)serine.

The protein belongs to the acyl carrier protein (ACP) family. Post-translationally, 4'-phosphopantetheine is transferred from CoA to a specific serine of apo-ACP by AcpS. This modification is essential for activity because fatty acids are bound in thioester linkage to the sulfhydryl of the prosthetic group.

The protein resides in the cytoplasm. It participates in lipid metabolism; fatty acid biosynthesis. Functionally, carrier of the growing fatty acid chain in fatty acid biosynthesis. This chain is Acyl carrier protein, found in Chlamydia trachomatis serovar L2 (strain ATCC VR-902B / DSM 19102 / 434/Bu).